We begin with the raw amino-acid sequence, 366 residues long: Methylthioribose-1-phosphate isomerase (366 aa).

Aspartate 260 (proton donor) is an active-site residue.

Belongs to the eIF-2B alpha/beta/delta subunits family. MtnA subfamily.

The protein localises to the cytoplasm. Its subcellular location is the nucleus. It carries out the reaction 5-(methylsulfanyl)-alpha-D-ribose 1-phosphate = 5-(methylsulfanyl)-D-ribulose 1-phosphate. It functions in the pathway amino-acid biosynthesis; L-methionine biosynthesis via salvage pathway; L-methionine from S-methyl-5-thio-alpha-D-ribose 1-phosphate: step 1/6. Functionally, catalyzes the interconversion of methylthioribose-1-phosphate (MTR-1-P) into methylthioribulose-1-phosphate (MTRu-1-P). The sequence is that of Methylthioribose-1-phosphate isomerase from Caenorhabditis elegans.